The following is a 135-amino-acid chain: PTS system sorbose-specific EIIA component (135 aa).

In terms of domain architecture, PTS EIIA type-4 spans 1 to 131; the sequence is MVHAIFCAHG…CVVWQQPETV (131 aa). Residue histidine 9 is the Tele-phosphohistidine intermediate of the active site. Histidine 9 bears the Phosphohistidine; by HPr mark.

Its subcellular location is the cytoplasm. In terms of biological role, the phosphoenolpyruvate-dependent sugar phosphotransferase system (PTS), a major carbohydrate active transport system, catalyzes the phosphorylation of incoming sugar substrates concomitant with their translocation across the cell membrane. The enzyme II SorABFM PTS system is involved in L-sorbose transport. The polypeptide is PTS system sorbose-specific EIIA component (Klebsiella pneumoniae).